A 463-amino-acid polypeptide reads, in one-letter code: MHRLVASVIDTVVNLAKRRGFVYPSGEIYGGTRSAWDYGPLGVEFKENIKRQWWRSVVTGREDVVGLDSSIILPRQVWVASGHVEVFHDPLVESLITHKRYRADHLIEAYEAKHGHPPPNGLADIRDPDTGEPGRWTEPREFNMMLKTYLGPIETEEGLHYLRPETAQGIFVNFANVVTTARKKPPFGIGQIGKSFRNEITPGNFIFRTREFEQMEMEFFVEPSTAKEWHQYWIDTRLQWYVELGIDPQNLRLFEHPADKLSHYSDRTVDIEYKFGFAGNPWGELEGVANRTDFDLSTHSKHSGVDLSFYDQATDSRYIPYVIEPAAGLTRSFMAFLIDAYVEDEAPNAKGKMEKRAVLRLDPRLAPVKAAVLPLSRHADLSPKARDLAAELRRFWNIEFDDAGAIGRRYRRQDEIGTPFCVTVDFDSLEDNAVTVRRRDDMSQERIGMDAVADYLSARLKGC.

Arg-102 is a substrate binding site. The interval Lys-113–Gly-134 is disordered. A substrate-binding site is contributed by Glu-165. Residues Arg-197–Glu-199, Phe-207–Phe-212, Glu-284–Leu-285, and Gly-328–Arg-331 each bind ATP. Phe-212 to Glu-216 contributes to the substrate binding site. Glu-324–Gly-328 serves as a coordination point for substrate.

This sequence belongs to the class-II aminoacyl-tRNA synthetase family. In terms of assembly, homodimer.

It is found in the cytoplasm. The catalysed reaction is tRNA(Gly) + glycine + ATP = glycyl-tRNA(Gly) + AMP + diphosphate. Functionally, catalyzes the attachment of glycine to tRNA(Gly). This is Glycine--tRNA ligase from Mycolicibacterium paratuberculosis (strain ATCC BAA-968 / K-10) (Mycobacterium paratuberculosis).